We begin with the raw amino-acid sequence, 453 residues long: Ribose 1,5-bisphosphate phosphokinase PhnN (453 aa).

Residues 1-21 are disordered; the sequence is MHGSTGFVQGTRPAGDQADPL. The segment at 1-271 is unknown; the sequence is MHGSTGFVQG…SGQGERASLP (271 aa). The ribose 1,5-bisphosphokinase stretch occupies residues 272–453; it reads HSGRIFFCVG…KLLDILRQAK (182 aa).

The protein in the C-terminal section; belongs to the ribose 1,5-bisphosphokinase family.

The enzyme catalyses alpha-D-ribose 1,5-bisphosphate + ATP = 5-phospho-alpha-D-ribose 1-diphosphate + ADP. Its pathway is metabolic intermediate biosynthesis; 5-phospho-alpha-D-ribose 1-diphosphate biosynthesis; 5-phospho-alpha-D-ribose 1-diphosphate from D-ribose 5-phosphate (route II): step 3/3. Its function is as follows. Catalyzes the phosphorylation of ribose 1,5-bisphosphate to 5-phospho-D-ribosyl alpha-1-diphosphate (PRPP). In Janthinobacterium sp. (strain Marseille) (Minibacterium massiliensis), this protein is Ribose 1,5-bisphosphate phosphokinase PhnN (phnN).